The primary structure comprises 662 residues: DNA topoisomerase 4 subunit B (662 aa).

Residues Tyr-20, Asn-60, Asp-87, 129–135, and Lys-359 each bind ATP; that span reads GLHGVGI. Positions 439-553 constitute a Toprim domain; the sequence is TELFIVEGDS…EGHLYLAKPP (115 aa). Mg(2+) is bound by residues Glu-445, Asp-518, and Asp-520.

Belongs to the type II topoisomerase family. ParE type 1 subfamily. Heterotetramer composed of ParC and ParE. It depends on Mg(2+) as a cofactor. The cofactor is Mn(2+). Ca(2+) is required as a cofactor.

The enzyme catalyses ATP-dependent breakage, passage and rejoining of double-stranded DNA.. Functionally, topoisomerase IV is essential for chromosome segregation. It relaxes supercoiled DNA. Performs the decatenation events required during the replication of a circular DNA molecule. This is DNA topoisomerase 4 subunit B from Rickettsia felis (strain ATCC VR-1525 / URRWXCal2) (Rickettsia azadi).